The chain runs to 237 residues: UPF0053 inner membrane protein YgdQ (237 aa).

Topologically, residues 1-17 are periplasmic; the sequence is MLFAWITDPNAWLALGT. A helical membrane pass occupies residues 18 to 38; it reads LTLLEIVLGIDNIIFLSLVVA. Over 39–50 the chain is Cytoplasmic; it reads KLPTAQRAHARR. The helical transmembrane segment at 51 to 71 threads the bilayer; sequence LGLAGAMVMRLALLASIAWVT. At 72–79 the chain is on the periplasmic side; it reads RLTNPLFT. Residues 80–100 form a helical membrane-spanning segment; sequence IFSQEISARDLILLLGGLFLI. Residues 101-124 are Cytoplasmic-facing; the sequence is WKASKEIHESIEGEEEGLKTRVSS. Residues 125–145 form a helical membrane-spanning segment; the sequence is FLGAIVQIMLLDIIFSLDSVI. Over 146 to 151 the chain is Periplasmic; that stretch reads TAVGLS. The helical transmembrane segment at 152–172 threads the bilayer; it reads DHLFIMMAAVVIAVGVMMFAA. The Cytoplasmic segment spans residues 173–186; the sequence is RSIGDFVERHPSVK. The chain crosses the membrane as a helical span at residues 187-207; the sequence is MLALSFLILVGFTLILESFDI. Residues 208–209 are Periplasmic-facing; the sequence is HV. The chain crosses the membrane as a helical span at residues 210 to 230; the sequence is PKGYIYFAMFFSIAVESLNLI. At 231–237 the chain is on the cytoplasmic side; sequence RNKKNPL.

The protein belongs to the UPF0053 family.

The protein localises to the cell inner membrane. The chain is UPF0053 inner membrane protein YgdQ (ygdQ) from Escherichia coli O157:H7.